The chain runs to 542 residues: Mitochondrial distribution and morphology protein 34 (542 aa).

In terms of domain architecture, SMP-LTD spans 1 to 216 (MSFRFNKGAF…LPSVIFSMSQ (216 aa)). Disordered regions lie at residues 27–58 (LNSK…TRGP) and 372–435 (SSGD…TTAV). Residues 31–48 (TQSSSQTAPANTTNSAAT) are compositionally biased toward low complexity. A compositionally biased stretch (basic and acidic residues) spans 49-58 (DEVKQETRGP). Residues 379-394 (IRRRKIKMGKKSKSKK) are compositionally biased toward basic residues. A compositionally biased stretch (low complexity) spans 403–414 (SSPTVVMPSSPS).

The protein belongs to the MDM34 family. In terms of assembly, component of the ER-mitochondria encounter structure (ERMES) or MDM complex, composed of MMM1, MDM10, MDM12 and MDM34.

Its subcellular location is the mitochondrion outer membrane. Functionally, component of the ERMES/MDM complex, which serves as a molecular tether to connect the endoplasmic reticulum (ER) and mitochondria. Components of this complex are involved in the control of mitochondrial shape and protein biogenesis, and function in nonvesicular lipid trafficking between the ER and mitochondria. MDM34 is required for the interaction of the ER-resident membrane protein MMM1 and the outer mitochondrial membrane-resident beta-barrel protein MDM10. The polypeptide is Mitochondrial distribution and morphology protein 34 (Lachancea thermotolerans (strain ATCC 56472 / CBS 6340 / NRRL Y-8284) (Yeast)).